Reading from the N-terminus, the 358-residue chain is Uroporphyrinogen decarboxylase (358 aa).

Residues 29-33 (RQAGR), aspartate 79, tyrosine 156, threonine 211, and histidine 329 contribute to the substrate site.

This sequence belongs to the uroporphyrinogen decarboxylase family. As to quaternary structure, homodimer.

The protein localises to the cytoplasm. The catalysed reaction is uroporphyrinogen III + 4 H(+) = coproporphyrinogen III + 4 CO2. The protein operates within porphyrin-containing compound metabolism; protoporphyrin-IX biosynthesis; coproporphyrinogen-III from 5-aminolevulinate: step 4/4. Its function is as follows. Catalyzes the decarboxylation of four acetate groups of uroporphyrinogen-III to yield coproporphyrinogen-III. The polypeptide is Uroporphyrinogen decarboxylase (Idiomarina loihiensis (strain ATCC BAA-735 / DSM 15497 / L2-TR)).